Reading from the N-terminus, the 364-residue chain is UDP-N-acetylglucosamine--N-acetylmuramyl-(pentapeptide) pyrophosphoryl-undecaprenol N-acetylglucosamine transferase (364 aa).

UDP-N-acetyl-alpha-D-glucosamine contacts are provided by residues 10 to 12 (TGG), Asn124, Ser195, Ile250, and Gln295.

This sequence belongs to the glycosyltransferase 28 family. MurG subfamily.

The protein localises to the cell membrane. It carries out the reaction Mur2Ac(oyl-L-Ala-gamma-D-Glu-L-Lys-D-Ala-D-Ala)-di-trans,octa-cis-undecaprenyl diphosphate + UDP-N-acetyl-alpha-D-glucosamine = beta-D-GlcNAc-(1-&gt;4)-Mur2Ac(oyl-L-Ala-gamma-D-Glu-L-Lys-D-Ala-D-Ala)-di-trans,octa-cis-undecaprenyl diphosphate + UDP + H(+). Its pathway is cell wall biogenesis; peptidoglycan biosynthesis. Functionally, cell wall formation. Catalyzes the transfer of a GlcNAc subunit on undecaprenyl-pyrophosphoryl-MurNAc-pentapeptide (lipid intermediate I) to form undecaprenyl-pyrophosphoryl-MurNAc-(pentapeptide)GlcNAc (lipid intermediate II). This chain is UDP-N-acetylglucosamine--N-acetylmuramyl-(pentapeptide) pyrophosphoryl-undecaprenol N-acetylglucosamine transferase, found in Levilactobacillus brevis (strain ATCC 367 / BCRC 12310 / CIP 105137 / JCM 1170 / LMG 11437 / NCIMB 947 / NCTC 947) (Lactobacillus brevis).